The chain runs to 386 residues: Hydrazine synthase subunit beta (386 aa).

The N-terminal stretch at 1-34 is a signal peptide; that stretch reads MVIRRKMNKMIRKGMIGAVMLGAAVAISGGVATA.

In terms of assembly, part of the hydrazine synthase complex that forms an elongated dimer of heterotrimers composed of one alpha, one beta and one gamma subunit.

It is found in the anammoxosome. It functions in the pathway nitrogen metabolism. Its function is as follows. Component of the hydrazine synthase complex that catalyzes the condensation of nitric oxide (NO) with ammonium to form hydrazine. The beta subunit may play a role in modulating transport of the hydroxylamine intermediate through a tunnel between the gamma and alpha subunit's active site. Is involved in anaerobic ammonium oxidation (anammox), a biological process in which nitrite is used as the electron acceptor in the conversion of ammonium to dinitrogen gas (N2) and water; this bacterial process has a major role in the Earth's nitrogen cycle and has been estimated to synthesize up to 50% of the dinitrogen gas emitted into our atmosphere from the oceans. The polypeptide is Hydrazine synthase subunit beta (Kuenenia stuttgartiensis).